Reading from the N-terminus, the 418-residue chain is MDMLHPSSVSTTSEPENASSAWPPDATLGNVSAGPSPAGLAVSGVLIPLVYLVVCVVGLLGNSLVIYVVLRHTASPSVTNVYILNLALADELFMLGLPFLAAQNALSYWPFGSLMCRLVMAVDGINQFTSIFCLTVMSVDRYLAVVHPTRSARWRTAPVARTVSAAVWVASAVVVLPVVVFSGVPRGMSTCHMQWPEPAAAWRAGFIIYTAALGFFGPLLVICLCYLLIVVKVRSAGRRVWAPSCQRRRRSERRVTRMVVAVVALFVLCWMPFYVLNIVNVVCPLPEEPAFFGLYFLVVALPYANSCANPILYGFLSYRFKQGFRRVLLRPSRRVRSQEPTVGPPEKTEEEDEEEEDGEESREGGKGKEMNGRVSQITQPGTSGQERPPSRVASKEQQLLPQEASTGEKSSTMRISYL.

The disordered stretch occupies residues 1 to 21 (MDMLHPSSVSTTSEPENASSA). The Extracellular portion of the chain corresponds to 1–43 (MDMLHPSSVSTTSEPENASSAWPPDATLGNVSAGPSPAGLAVS). Polar residues predominate over residues 7–20 (SSVSTTSEPENASS). N-linked (GlcNAc...) asparagine glycosylation is found at Asn-17 and Asn-30. The chain crosses the membrane as a helical span at residues 44 to 69 (GVLIPLVYLVVCVVGLLGNSLVIYVV). Residues 70–79 (LRHTASPSVT) are Cytoplasmic-facing. Residues 80–101 (NVYILNLALADELFMLGLPFLA) form a helical membrane-spanning segment. Residues 102 to 116 (AQNALSYWPFGSLMC) lie on the Extracellular side of the membrane. An intrachain disulfide couples Cys-116 to Cys-191. The helical transmembrane segment at 117 to 138 (RLVMAVDGINQFTSIFCLTVMS) threads the bilayer. Topologically, residues 139–161 (VDRYLAVVHPTRSARWRTAPVAR) are cytoplasmic. Residues 162 to 181 (TVSAAVWVASAVVVLPVVVF) form a helical membrane-spanning segment. Topologically, residues 182 to 205 (SGVPRGMSTCHMQWPEPAAAWRAG) are extracellular. Residues 206–231 (FIIYTAALGFFGPLLVICLCYLLIVV) traverse the membrane as a helical segment. The Cytoplasmic portion of the chain corresponds to 232–257 (KVRSAGRRVWAPSCQRRRRSERRVTR). Residues 258-279 (MVVAVVALFVLCWMPFYVLNIV) form a helical membrane-spanning segment. At 280-293 (NVVCPLPEEPAFFG) the chain is on the extracellular side. Residues 294 to 316 (LYFLVVALPYANSCANPILYGFL) form a helical membrane-spanning segment. At 317 to 418 (SYRFKQGFRR…KSSTMRISYL (102 aa)) the chain is on the cytoplasmic side. 2 positions are modified to phosphoserine: Ser-332 and Ser-337. The tract at residues 335-418 (VRSQEPTVGP…KSSTMRISYL (84 aa)) is disordered. The residue at position 348 (Thr-348) is a Phosphothreonine. Residues 348 to 360 (TEEEDEEEEDGEE) are compositionally biased toward acidic residues. The span at 361-371 (SREGGKGKEMN) shows a compositional bias: basic and acidic residues. 2 stretches are compositionally biased toward polar residues: residues 373-385 (RVSQITQPGTSGQ) and 395-418 (KEQQLLPQEASTGEKSSTMRISYL).

This sequence belongs to the G-protein coupled receptor 1 family. In terms of assembly, homodimer and heterodimer with SSTR2. Heterodimerization with SSTR2 inactivates SSTR3 receptor function. In terms of processing, phosphorylated. Phosphorylation increases upon somatostatin binding. As to expression, brain, pituitary and pancreas.

It localises to the cell membrane. In terms of biological role, receptor for somatostatin-14 and -28. This receptor is coupled via pertussis toxin sensitive G proteins to inhibition of adenylyl cyclase. The protein is Somatostatin receptor type 3 (SSTR3) of Homo sapiens (Human).